Reading from the N-terminus, the 1011-residue chain is Rap guanine nucleotide exchange factor 4 (1011 aa).

Positions 216 to 291 constitute a DEP domain; the sequence is SRAPHMIRDR…DKYLFYRFLD (76 aa). Residues 422 to 425 and 432 to 433 each bind 3',5'-cyclic AMP; these read GKLA and RA. The region spanning 496–634 is the N-terminal Ras-GEF domain; sequence QKYTVMSGTP…ELEKIVKQIS (139 aa). Residues 772–1009 form the Ras-GEF domain; it reads SSKDLAYQMT…SQMSHRLEPR (238 aa).

In terms of assembly, interacts with RAP1B, RIMS1 and RIMS2. Probably part of a complex with RIMS2 and GTP-activated RAB3A. In terms of tissue distribution, expressed in cerebellum, pituitary, adrenal gland and liver.

The protein resides in the cytoplasm. Its subcellular location is the membrane. Functionally, guanine nucleotide exchange factor (GEF) for RAP1A, RAP1B and RAP2A small GTPases that is activated by binding cAMP. Seems not to activate RAB3A. Involved in cAMP-dependent, PKA-independent exocytosis through interaction with RIMS2. The sequence is that of Rap guanine nucleotide exchange factor 4 (Rapgef4) from Mus musculus (Mouse).